A 1076-amino-acid chain; its full sequence is Bifunctional glutamine synthetase adenylyltransferase/adenylyl-removing enzyme (1076 aa).

An adenylyl removase region spans residues 1–521; it reads MESSIFKPSS…LHLDIYYRPM (521 aa). Positions 524–1076 are adenylyl transferase; the sequence is VNAQMENDQI…LERNRRRAQR (553 aa). The span at 1042-1056 shows a compositional bias: low complexity; sequence TATASAATQQPQTAP. Residues 1042-1076 are disordered; sequence TATASAATQQPQTAPRPRMHVIAPRLERNRRRAQR.

It belongs to the GlnE family. Mg(2+) serves as cofactor.

It carries out the reaction [glutamine synthetase]-O(4)-(5'-adenylyl)-L-tyrosine + phosphate = [glutamine synthetase]-L-tyrosine + ADP. The enzyme catalyses [glutamine synthetase]-L-tyrosine + ATP = [glutamine synthetase]-O(4)-(5'-adenylyl)-L-tyrosine + diphosphate. In terms of biological role, involved in the regulation of glutamine synthetase GlnA, a key enzyme in the process to assimilate ammonia. When cellular nitrogen levels are high, the C-terminal adenylyl transferase (AT) inactivates GlnA by covalent transfer of an adenylyl group from ATP to specific tyrosine residue of GlnA, thus reducing its activity. Conversely, when nitrogen levels are low, the N-terminal adenylyl removase (AR) activates GlnA by removing the adenylyl group by phosphorolysis, increasing its activity. The regulatory region of GlnE binds the signal transduction protein PII (GlnB) which indicates the nitrogen status of the cell. This is Bifunctional glutamine synthetase adenylyltransferase/adenylyl-removing enzyme from Bifidobacterium longum (strain DJO10A).